Consider the following 440-residue polypeptide: 2-methylisoborneol synthase (440 aa).

Residues 1–116 (MPDSGPLGPH…SPAPAEPAAG (116 aa)) are disordered. Positions 17-27 (TPATTVPDAPA) are enriched in low complexity. The span at 48-58 (PPVPIPSPSPP) shows a compositional bias: pro residues. A compositionally biased stretch (low complexity) spans 59-75 (SGSASAAADTPDATTVG). Pro residues predominate over residues 102–111 (PSLPGSPAPA). Mg(2+) contacts are provided by Asp-197, Asp-198, Glu-202, Asn-345, Ser-349, and Glu-353.

This sequence belongs to the terpene synthase family. 2-methylisoborneol synthase subfamily. It depends on Mg(2+) as a cofactor.

The catalysed reaction is (E)-2-methylgeranyl diphosphate + H2O = 2-methylisoborneol + diphosphate. Its function is as follows. Catalyzes the cyclization of 2-methylgeranyl diphosphate (2-MeGPP) to 2-methylisoborneol (2-MIB), which likely involves the intermediacy of 2-methyllinalyl diphosphate. This is 2-methylisoborneol synthase from Streptomyces ambofaciens (strain ATCC 23877 / 3486 / DSM 40053 / JCM 4204 / NBRC 12836 / NRRL B-2516).